A 272-amino-acid chain; its full sequence is uncharacterized protein (272 aa).

It localises to the periplasm. Its function is as follows. May be involved in ulvan degradation. Ulvan is the main polysaccharide component of the Ulvales (green seaweed) cell wall. It is composed of disaccharide building blocks comprising 3-sulfated rhamnose (Rha3S) linked to D-glucuronic acid (GlcA), L-iduronic acid (IduA), or D-xylose (Xyl). This is an uncharacterized protein from Formosa agariphila (strain DSM 15362 / KCTC 12365 / LMG 23005 / KMM 3901 / M-2Alg 35-1).